A 420-amino-acid polypeptide reads, in one-letter code: Acetyl-CoA acetyltransferase, mitochondrial (420 aa).

The transit peptide at M1–N33 directs the protein to the mitochondrion. The Acyl-thioester intermediate role is filled by C119. Residues Y212, R251 to D253, and K256 each bind CoA. Y212 serves as a coordination point for K(+). K(+)-binding residues include A273, A274, and A276. S277 contacts CoA. V374 contributes to the K(+) binding site. C406 functions as the Proton donor/acceptor in the catalytic mechanism.

Belongs to the thiolase-like superfamily. Thiolase family. As to quaternary structure, homotetramer.

It is found in the mitochondrion. The catalysed reaction is 2 acetyl-CoA = acetoacetyl-CoA + CoA. It catalyses the reaction propanoyl-CoA + acetyl-CoA = 2-methyl-3-oxobutanoyl-CoA + CoA. The protein operates within lipid metabolism; fatty acid beta-oxidation. In terms of biological role, this is one of the enzymes that catalyzes the last step of the mitochondrial beta-oxidation pathway, an aerobic process breaking down fatty acids into acetyl-CoA. Using free coenzyme A/CoA, catalyzes the thiolytic cleavage of medium- to long-chain 3-oxoacyl-CoAs into acetyl-CoA and a fatty acyl-CoA shortened by two carbon atoms. The activity of the enzyme is reversible and it can also catalyze the condensation of two acetyl-CoA molecules into acetoacetyl-CoA. Thereby, it plays a major role in ketone body metabolism. The polypeptide is Acetyl-CoA acetyltransferase, mitochondrial (acat1) (Xenopus tropicalis (Western clawed frog)).